A 556-amino-acid polypeptide reads, in one-letter code: Neurofilament light polypeptide (556 aa).

At Ser-2 the chain carries N-acetylserine. The tract at residues 2-94 (SSYGYDPFFP…KSIRSQERAQ (93 aa)) is head. The region spanning 91-402 (ERAQLQDLND…KLLEGEETRL (312 aa)) is the IF rod domain. The coil 1A stretch occupies residues 95-126 (LQDLNDRFACFIERVHELEQQNKVLEAELLVL). A linker 1 region spans residues 127-139 (RQKHAEPSRFRAL). The coil 1B stretch occupies residues 140-235 (YEQEIRELRL…KVHEEELAEL (96 aa)). Residues 236–254 (QAQIQYAHLSVEMDVSAKP) are linker 12. The tract at residues 255 to 273 (DLSAALRDIRAQYEKLAAR) is coil 2A. The segment at 274–282 (NMQNAEEWF) is linker 2. The coil 2B stretch occupies residues 283–398 (RSRFTVLSES…AAYRKLLEGE (116 aa)). Residues 399 to 445 (ETRLSFTSVGSITSGYTQTAPTFGRSAYSGLQSTSYLMTTRSFPTYY) form a tail, subdomain A region. Residues 399–556 (ETRLSFTSVG…KEETEVKKKA (158 aa)) are tail. Positions 446 to 556 (SSHVQEEQIE…KEETEVKKKA (111 aa)) are tail, subdomain B (acidic). The span at 464-473 (KAGEAKAAPA) shows a compositional bias: low complexity. Positions 464 to 556 (KAGEAKAAPA…KEETEVKKKA (93 aa)) are disordered. Positions 474-540 (EEGEEEEKEE…AEETGEEEKE (67 aa)) are enriched in acidic residues. The span at 541–556 (EKEAAGKEETEVKKKA) shows a compositional bias: basic and acidic residues.

It belongs to the intermediate filament family. Forms homodimers (in vitro).

The protein resides in the cell projection. Its subcellular location is the axon. It localises to the cytoplasm. It is found in the cytoskeleton. In terms of biological role, neurofilaments usually contain three intermediate filament proteins: NEFL, NEFM, and NEFH which are involved in the maintenance of neuronal caliber. May additionally cooperate with the neuronal intermediate filament proteins to form neuronal filamentous networks. This chain is Neurofilament light polypeptide (NEFL), found in Coturnix japonica (Japanese quail).